The primary structure comprises 76 residues: Protein RALF-like 30 (76 aa).

A signal peptide spans 1–22 (MKAWVICLMVISIFMMIEPTLA). Intrachain disulfides connect C37/C46 and C66/C72.

It belongs to the plant rapid alkalinization factor (RALF) family.

The protein resides in the secreted. Its function is as follows. Cell signaling peptide that may regulate plant stress, growth, and development. Mediates a rapid alkalinization of extracellular space by mediating a transient increase in the cytoplasmic Ca(2+) concentration leading to a calcium-dependent signaling events through a cell surface receptor and a concomitant activation of some intracellular mitogen-activated protein kinases. The chain is Protein RALF-like 30 (RALFL30) from Arabidopsis thaliana (Mouse-ear cress).